Consider the following 478-residue polypeptide: Glycogen synthase (478 aa).

Position 16 (K16) interacts with ADP-alpha-D-glucose.

The protein belongs to the glycosyltransferase 1 family. Bacterial/plant glycogen synthase subfamily.

The catalysed reaction is [(1-&gt;4)-alpha-D-glucosyl](n) + ADP-alpha-D-glucose = [(1-&gt;4)-alpha-D-glucosyl](n+1) + ADP + H(+). It functions in the pathway glycan biosynthesis; glycogen biosynthesis. Functionally, synthesizes alpha-1,4-glucan chains using ADP-glucose. The protein is Glycogen synthase of Lachnospira eligens (strain ATCC 27750 / DSM 3376 / VPI C15-48 / C15-B4) (Eubacterium eligens).